Here is a 310-residue protein sequence, read N- to C-terminus: Zinc finger protein 346 (310 aa).

The residue at position 1 (methionine 1) is an N-acetylmethionine. A compositionally biased stretch (low complexity) spans 1 to 12; the sequence is MEYPAPAAVQAA. Residues 1–33 are disordered; it reads MEYPAPAAVQAADGGGAGPYNSSELLEGQEPDG. The Matrin-type 1 zinc finger occupies 70–104; it reads FTNTQCKVCCALLISESQKLAHYQSKKHANKVKRY. Positions 75, 78, 91, and 97 each coordinate Zn(2+). Lysine 114 is covalently cross-linked (Glycyl lysine isopeptide (Lys-Gly) (interchain with G-Cter in SUMO2)). The Matrin-type 2 zinc-finger motif lies at 131–165; the sequence is DKNQCCPICNMTFSSPVVAQSHYLGKTHAKNLKLK. Positions 136, 139, 152, and 158 each coordinate Zn(2+). Lysine 170 participates in a covalent cross-link: Glycyl lysine isopeptide (Lys-Gly) (interchain with G-Cter in SUMO2). 2 Matrin-type zinc fingers span residues 198–232 and 252–286; these read DPDK…ETKL and GKGY…SPKT. The tract at residues 278–310 is disordered; it reads KHKNQSPKTVASSLGQIPMQRQPIQKDSTTLED. Composition is skewed to polar residues over residues 283 to 292 and 299 to 310; these read SPKTVASSLG and QPIQKDSTTLED.

Forms a heteromeric complex with XPO5 and ILF3. Found in a nuclear export complex with XPO5, RAN, ILF3, ZNF346 and double-stranded RNA. Interacts with XPO5. Interacts with ILF3 in an RNA-independent manner.

It localises to the nucleus. The protein localises to the nucleolus. The protein resides in the cytoplasm. Its function is as follows. Binds with low affinity to dsDNA and ssRNA, and with high affinity to dsRNA, with no detectable sequence specificity. This is Zinc finger protein 346 (ZNF346) from Pongo abelii (Sumatran orangutan).